Reading from the N-terminus, the 932-residue chain is MTTDTDTDVDAGTDLEPQPEGPPEKMLTRRTELTPMLSQYLDCCEAHPDALVLFQVGDFYEAFCEAATTVAQVCEVTLTQREDSTGTYRMAGVPIDNATSYIEALLSADFRVAIAEQVEEAEATSGLVDRAVTNIITPGTVTNGDLLTDAAATYLGAVSITDSDGDASEMTGAIATVDVSTGACRVTSVEHDQIYEELSRLRPAELLIGPEVDTKTIESSSLPFETMQTTHNSGAFELATATQTLEAYVDEPTAFLSSAERRAVGAVLDYAEYTQGDCGPLEYVSRIRRYKTDTALRVDATAIQSLELFDSRQPYGETLIETIDETSSALGRRTLESWLRRPLADHEAIKTRYDAVAALAENPLVVETLTEKLSHIYDLERLTARTAREQADARDMRSLLQSLDSIPEIKSALIEVLTETELPAETLEQLQAELDSLDDIRTLIDTAVCSDPPQTVTDGDVIAKGFNDDLDDIREREEAGREWVSELETRERERTGIDSLEVGYTEVHGYYIEVTNPNLDHVPDEYTRRQTLKNAERFYTPALKRREDEIIAASNRADKLEYELFCDIRAEVAAETSRLQAVADAIGRLDALVSFATIAISHAYVRPEITADTLAIEAGRHPVVEQTQAEFVPNGITFEKGHIAMITGPNMSGKSTYMRQIAHICILAQAGSFVPADAAQIPVLDRIFTRIGASDDISGGESTFMREMSEMTDILHNATESSLILLDEVGRGTSTTDGRAIARATVEFIHNEIGARTLFTTHYHDLTTVTGSLPSAFNLHFKVHRKTHPDNDASVTFLHRVTSGAADSSYGVEVAKLAGVPTPVVEQAQRYIHTEGEDYTEISEQGTHHHDELTHAEMVSVDHDNQQNQASDDDEIARSPRGADTNTDAGINQSDVSANIDVLKSLRDIDIARMTPLEALNMLENLQRRLDE.

A compositionally biased stretch (acidic residues) spans 1–13 (MTTDTDTDVDAGT). The interval 1–26 (MTTDTDTDVDAGTDLEPQPEGPPEKM) is disordered. 648–655 (GPNMSGKS) is an ATP binding site. The disordered stretch occupies residues 865–892 (NQQNQASDDDEIARSPRGADTNTDAGIN).

This sequence belongs to the DNA mismatch repair MutS family.

In terms of biological role, this protein is involved in the repair of mismatches in DNA. It is possible that it carries out the mismatch recognition step. This protein has a weak ATPase activity. The protein is DNA mismatch repair protein MutS of Haloquadratum walsbyi (strain DSM 16790 / HBSQ001).